The chain runs to 122 residues: Thioredoxin H-type (122 aa).

The Thioredoxin domain occupies 2 to 118 (AAEEGVVIAC…IVKHVGATAA (117 aa)). Cysteine 40 and cysteine 43 form a disulfide bridge.

It localises to the cytoplasm. In terms of biological role, participates in various redox reactions through the reversible oxidation of the active center dithiol to a disulfide. The H form is known to activate a number of cytosolic enzymes. The chain is Thioredoxin H-type (TRXH) from Oryza sativa subsp. indica (Rice).